The chain runs to 421 residues: Zinc finger protein 57 (421 aa).

Residues 15–88 (VSYEDVAVSF…SCTGVFKGGP (74 aa)) form the KRAB domain. A C2H2-type 1; degenerate zinc finger spans residues 90–113 (FFCLTCGKCFKKNTFLFNHQFPVR). 2 C2H2-type zinc fingers span residues 140-162 (FFCN…RRAH) and 168-190 (RSCP…LKVH). A disordered region spans residues 191 to 221 (QNKPAASNQAGNQASNQRLKSRVPPTTPRSQ). Residues 195–207 (AASNQAGNQASNQ) are compositionally biased toward low complexity. The C2H2-type 4 zinc finger occupies 264–286 (ISCPYCHITFTMRTCLLTHLKIH). A C2H2-type 5; degenerate zinc finger spans residues 313–332 (YTCPVCDSSFRGKESLLDHL). The disordered stretch occupies residues 371–421 (GKRMESRRRRRKRACTENPETEGLSGKGRVAPWEMEGATSPESPVTEEDSD).

Belongs to the krueppel C2H2-type zinc-finger protein family. As to expression, expressed in oocytes and in a subset of adult tissues. Expressed at high levels in testis, and at low levels in cerebellum. Present in sciatic nerve and spinal cord (at protein level).

It is found in the nucleus. In terms of biological role, transcription regulator required to maintain maternal and paternal gene imprinting, a process by which gene expression is restricted in a parent of origin-specific manner by epigenetic modification of genomic DNA and chromatin, including DNA methylation. Acts by controlling DNA methylation during the earliest multicellular stages of development at multiple imprinting control regions (ICRs). Acts together with ZNF445, but ZFP57 plays the predominant role in imprinting maintenance. In contrast, in humans, ZNF445 seems to be the major factor early embryonic imprinting maintenance. Required for the establishment of maternal methylation imprints at SNRPN locus. Acts as a transcriptional repressor in Schwann cells. Binds to a 5'-TGCCGC-3' consensus sequence and recognizes the methylated CpG within this element. This chain is Zinc finger protein 57 (Zfp57), found in Mus musculus (Mouse).